The following is a 78-amino-acid chain: UPF0349 protein Sca_0544 (78 aa).

It belongs to the UPF0349 family.

This chain is UPF0349 protein Sca_0544, found in Staphylococcus carnosus (strain TM300).